The sequence spans 268 residues: Zinc finger protein SNAI2 (268 aa).

The tract at residues 1–20 (MPRSFLVKKHFNASKKPNYS) is SNAG domain. Residues 80 to 117 (PASLGRVSPPPPSDTSSKDHSGSESPISDEEERLQSKL) form a disordered region. 4 consecutive C2H2-type zinc fingers follow at residues 128–150 (FQCNLCNKTYSTFSGLGKHKQLH), 159–181 (FSCKYCDKEYVSLGALKMHIRTH), 185–207 (CVCKICGKAFSRPWLLQGHIRTH), and 213–235 (FSCSHCSRAFADRSNLRAHLQTH). A C2H2-type 5; atypical zinc finger spans residues 241-264 (YQCKSCSKTFSRMSLLHKHEESGC).

This sequence belongs to the snail C2H2-type zinc-finger protein family. As to quaternary structure, interacts (via SNAG domain) with LIMD1 (via LIM domains), WTIP (via LIM domains) and AJUBA (via LIM domains). Interacts (via zinc fingers) with KPNA2, KPNB1, and TNPO1. May interact (via zinc fingers) with IPO7. Phosphorylated by GSK3B. Once phosphorylated, it becomes a target for ubiquitination. In terms of processing, ubiquitinated by the SCF(FBXO11) complex; ubiquitination requires previous GSK3B-mediated SNAI2 phosphorylation.

It is found in the nucleus. The protein localises to the cytoplasm. Its function is as follows. Transcriptional repressor that modulates both activator-dependent and basal transcription. Involved in the generation and migration of neural crest cells. Plays a role in mediating RAF1-induced transcriptional repression of the TJ protein, occludin (OCLN) and subsequent oncogenic transformation of epithelial cells. Represses BRCA2 expression by binding to its E2-box-containing silencer and recruiting CTBP1 and HDAC1 in breast cells. In epidermal keratinocytes, binds to the E-box in ITGA3 promoter and represses its transcription. Involved in the regulation of ITGB1 and ITGB4 expression and cell adhesion and proliferation in epidermal keratinocytes. Binds to E-box2 domain of BSG and activates its expression during TGFB1-induced epithelial-mesenchymal transition (EMT) in hepatocytes. Represses E-Cadherin/CDH1 transcription via E-box elements. Involved in osteoblast maturation. Binds to RUNX2 and SOC9 promoters and may act as a positive and negative transcription regulator, respectively, in osteoblasts. Binds to CXCL12 promoter via E-box regions in mesenchymal stem cells and osteoblasts. Plays an essential role in TWIST1-induced EMT and its ability to promote invasion and metastasis. This chain is Zinc finger protein SNAI2 (SNAI2), found in Bos taurus (Bovine).